The sequence spans 95 residues: Cobalt transport protein CbiN (95 aa).

Transmembrane regions (helical) follow at residues H5–G25 and L67–Y87.

This sequence belongs to the CbiN family. In terms of assembly, forms an energy-coupling factor (ECF) transporter complex composed of an ATP-binding protein (A component, CbiO), a transmembrane protein (T component, CbiQ) and 2 possible substrate-capture proteins (S components, CbiM and CbiN) of unknown stoichimetry.

Its subcellular location is the cell membrane. It functions in the pathway cofactor biosynthesis; adenosylcobalamin biosynthesis. Its function is as follows. Part of the energy-coupling factor (ECF) transporter complex CbiMNOQ involved in cobalt import. The polypeptide is Cobalt transport protein CbiN (Methanothermobacter thermautotrophicus (strain ATCC 29096 / DSM 1053 / JCM 10044 / NBRC 100330 / Delta H) (Methanobacterium thermoautotrophicum)).